The primary structure comprises 319 residues: Lipoyl synthase (319 aa).

The interval 6 to 29 (DTVSANPVRPRHPEKAARPDALSP) is disordered. The span at 16-29 (RHPEKAARPDALSP) shows a compositional bias: basic and acidic residues. Residues cysteine 61, cysteine 66, cysteine 72, cysteine 87, cysteine 91, cysteine 94, and serine 300 each contribute to the [4Fe-4S] cluster site. Residues 73 to 289 (WDKKHATFMI…QTTAYAKGFL (217 aa)) enclose the Radical SAM core domain.

It belongs to the radical SAM superfamily. Lipoyl synthase family. It depends on [4Fe-4S] cluster as a cofactor.

The protein localises to the cytoplasm. It catalyses the reaction [[Fe-S] cluster scaffold protein carrying a second [4Fe-4S](2+) cluster] + N(6)-octanoyl-L-lysyl-[protein] + 2 oxidized [2Fe-2S]-[ferredoxin] + 2 S-adenosyl-L-methionine + 4 H(+) = [[Fe-S] cluster scaffold protein] + N(6)-[(R)-dihydrolipoyl]-L-lysyl-[protein] + 4 Fe(3+) + 2 hydrogen sulfide + 2 5'-deoxyadenosine + 2 L-methionine + 2 reduced [2Fe-2S]-[ferredoxin]. The protein operates within protein modification; protein lipoylation via endogenous pathway; protein N(6)-(lipoyl)lysine from octanoyl-[acyl-carrier-protein]: step 2/2. In terms of biological role, catalyzes the radical-mediated insertion of two sulfur atoms into the C-6 and C-8 positions of the octanoyl moiety bound to the lipoyl domains of lipoate-dependent enzymes, thereby converting the octanoylated domains into lipoylated derivatives. In Rhodopseudomonas palustris (strain ATCC BAA-98 / CGA009), this protein is Lipoyl synthase.